The primary structure comprises 99 residues: U2-theraphotoxin-Lsp1a (99 aa).

Residues 1–22 (MNTIQVIIFAVVLVLTVTVGQA) form the signal peptide. Positions 23-57 (DEDSPEASLLRKLKEAEASLFGQNLEESRNSRQKR) are excised as a propeptide. 3 disulfide bridges follow: Cys58–Cys73, Cys65–Cys78, and Cys72–Cys93.

This sequence belongs to the neurotoxin 14 (magi-1) family. 08 (Ltx-4) subfamily. Expressed by the venom gland.

It is found in the secreted. Insecticidal neurotoxin. In Lasiodora sp. (strain IBSP 8539) (Brazilian salmon pink birdeater), this protein is U2-theraphotoxin-Lsp1a.